A 683-amino-acid chain; its full sequence is Cysteine-rich receptor-like protein kinase 28 (683 aa).

The signal sequence occupies residues 1–24 (MEHVRVIFFFFACVLKIVPFICLA). Topologically, residues 25–288 (QKDKYEFPPG…RTGKGKGGSK (264 aa)) are extracellular. Gnk2-homologous domains are found at residues 32-136 (PPGF…NMII) and 142-251 (TTPT…TWRF). Residues Asn43, Asn47, Asn73, and Asn153 are each glycosylated (N-linked (GlcNAc...) asparagine). The tract at residues 263–283 (PAIQPADSPTSAARTERTGKG) is disordered. Residues 289–309 (VIVAIVIPIVFVALFAICLCL) form a helical membrane-spanning segment. Over 310–683 (LLKWKKNKSV…DVTVSELSPR (374 aa)) the chain is Cytoplasmic. A Protein kinase domain is found at 361 to 641 (FSPENELGRG…ALMLNSYSYT (281 aa)). ATP is bound by residues 367–375 (LGRGGFGSV) and Lys389. At Tyr434 the chain carries Phosphotyrosine. Asp486 acts as the Proton acceptor in catalysis. Phosphoserine is present on Ser490. Phosphothreonine is present on Thr528. Tyr536 bears the Phosphotyrosine mark.

The protein belongs to the protein kinase superfamily. Ser/Thr protein kinase family. CRK subfamily.

It is found in the membrane. It catalyses the reaction L-seryl-[protein] + ATP = O-phospho-L-seryl-[protein] + ADP + H(+). It carries out the reaction L-threonyl-[protein] + ATP = O-phospho-L-threonyl-[protein] + ADP + H(+). This chain is Cysteine-rich receptor-like protein kinase 28 (CRK28), found in Arabidopsis thaliana (Mouse-ear cress).